The sequence spans 332 residues: 2,3-diketo-L-gulonate reductase (332 aa).

H44 functions as the Proton donor in the catalytic mechanism. NAD(+) contacts are provided by residues 168–174, 224–225, and 304–306; these read ITMVDMS, WK, and GHE.

Belongs to the LDH2/MDH2 oxidoreductase family. DlgD subfamily. As to quaternary structure, homodimer.

It is found in the cytoplasm. It carries out the reaction 3-dehydro-L-gulonate + NAD(+) = 2,3-dioxo-L-gulonate + NADH + H(+). The enzyme catalyses 3-dehydro-L-gulonate + NADP(+) = 2,3-dioxo-L-gulonate + NADPH + H(+). Its function is as follows. Catalyzes the reduction of 2,3-diketo-L-gulonate in the presence of NADH, to form 3-keto-L-gulonate. The chain is 2,3-diketo-L-gulonate reductase from Salmonella newport (strain SL254).